The sequence spans 305 residues: Nuclear egress protein 1 (305 aa).

Positions 1–42 (MYDIAPRRSGSRPGPGRDKTRRRSRFSAAGNPGVERRASRKS) are disordered. The CCCH-type zinc-finger motif lies at 105-224 (CLTLSGMGYY…YVIFPGTSAH (120 aa)).

This sequence belongs to the herpesviridae NEC1 protein family. As to quaternary structure, forms a heterohexameric complex with NEC2. Interacts with capsid vertex specific component 2/CVC2; this interaction directs the capsid to the host inner nuclear membrane to initiate budding. In terms of processing, phosphorylated at serine residues in the N-terminus. This phosphorylation regulates the localization within the inner nuclear membrane.

The protein localises to the host nucleus inner membrane. Functionally, plays an essential role in virion nuclear egress, the first step of virion release from infected cell. Within the host nucleus, NEC1 interacts with the newly formed capsid through the vertexes and directs it to the inner nuclear membrane by associating with NEC2. Induces the budding of the capsid at the inner nuclear membrane as well as its envelopment into the perinuclear space. There, the NEC1/NEC2 complex promotes the fusion of the enveloped capsid with the outer nuclear membrane and the subsequent release of the viral capsid into the cytoplasm where it will reach the secondary budding sites in the host Golgi or trans-Golgi network. In Human herpesvirus 2 (strain HG52) (HHV-2), this protein is Nuclear egress protein 1.